Reading from the N-terminus, the 331-residue chain is NADH-quinone oxidoreductase subunit H (331 aa).

8 helical membrane-spanning segments follow: residues 7–27 (ALVT…AVVI), 81–101 (MIFT…FAIV), 114–134 (IGIL…LFAG), 154–174 (ISYE…VGSF), 187–207 (VWFI…GVAV), 238–258 (FFVG…TLFF), 271–291 (WLSF…FILI), and 310–330 (VCLP…LAAA).

It belongs to the complex I subunit 1 family. As to quaternary structure, NDH-1 is composed of 13 different subunits. Subunits NuoA, H, J, K, L, M, N constitute the membrane sector of the complex.

It localises to the cell inner membrane. The catalysed reaction is a quinone + NADH + 5 H(+)(in) = a quinol + NAD(+) + 4 H(+)(out). In terms of biological role, NDH-1 shuttles electrons from NADH, via FMN and iron-sulfur (Fe-S) centers, to quinones in the respiratory chain. The immediate electron acceptor for the enzyme in this species is believed to be ubiquinone. Couples the redox reaction to proton translocation (for every two electrons transferred, four hydrogen ions are translocated across the cytoplasmic membrane), and thus conserves the redox energy in a proton gradient. This subunit may bind ubiquinone. The sequence is that of NADH-quinone oxidoreductase subunit H from Pseudomonas aeruginosa (strain ATCC 15692 / DSM 22644 / CIP 104116 / JCM 14847 / LMG 12228 / 1C / PRS 101 / PAO1).